A 166-amino-acid polypeptide reads, in one-letter code: Protein phosphatase 1 regulatory subunit 1A (166 aa).

Methionine 1 is modified (N-acetylmethionine). Residues 1 to 166 (MEQDNSPRKI…SQDSQGASAV (166 aa)) form a disordered region. The segment at 9–12 (KIQF) is essential for activity. Basic and acidic residues predominate over residues 19–29 (PHLDPEAAEQI). At threonine 35 the chain carries Phosphothreonine; by PKA. The tract at residues 42–54 (TSDQSSPEVDEDR) is essential for activity. Residues serine 43, serine 46, serine 47, and serine 67 each carry the phosphoserine modification. The span at 104-114 (AAEGTGAQESQ) shows a compositional bias: low complexity. Over residues 143 to 152 (AQERRGEEPS) the composition is skewed to basic and acidic residues. Residues 143 to 166 (AQERRGEEPSTAKTSQDSQGASAV) form an interaction with PPP1R15A region. Polar residues predominate over residues 153–166 (TAKTSQDSQGASAV).

It belongs to the protein phosphatase inhibitor 1 family. As to quaternary structure, interacts with PPP1R15A. Post-translationally, phosphorylation of Thr-35 is required for activity.

Its function is as follows. Inhibitor of protein-phosphatase 1. This protein may be important in hormonal control of glycogen metabolism. Hormones that elevate intracellular cAMP increase I-1 activity in many tissues. I-1 activation may impose cAMP control over proteins that are not directly phosphorylated by PKA. Following a rise in intracellular calcium, I-1 is inactivated by calcineurin (or PP2B). Does not inhibit type-2 phosphatases. This Oryctolagus cuniculus (Rabbit) protein is Protein phosphatase 1 regulatory subunit 1A (PPP1R1A).